Here is a 97-residue protein sequence, read N- to C-terminus: Aspartyl/glutamyl-tRNA(Asn/Gln) amidotransferase subunit C (97 aa).

Positions 58-78 (LPQGRLRKDTPRDPLDRENAL) are disordered. A compositionally biased stretch (basic and acidic residues) spans 63–77 (LRKDTPRDPLDRENA).

This sequence belongs to the GatC family. As to quaternary structure, heterotrimer of A, B and C subunits.

The enzyme catalyses L-glutamyl-tRNA(Gln) + L-glutamine + ATP + H2O = L-glutaminyl-tRNA(Gln) + L-glutamate + ADP + phosphate + H(+). The catalysed reaction is L-aspartyl-tRNA(Asn) + L-glutamine + ATP + H2O = L-asparaginyl-tRNA(Asn) + L-glutamate + ADP + phosphate + 2 H(+). In terms of biological role, allows the formation of correctly charged Asn-tRNA(Asn) or Gln-tRNA(Gln) through the transamidation of misacylated Asp-tRNA(Asn) or Glu-tRNA(Gln) in organisms which lack either or both of asparaginyl-tRNA or glutaminyl-tRNA synthetases. The reaction takes place in the presence of glutamine and ATP through an activated phospho-Asp-tRNA(Asn) or phospho-Glu-tRNA(Gln). This Saccharolobus islandicus (strain Y.N.15.51 / Yellowstone #2) (Sulfolobus islandicus) protein is Aspartyl/glutamyl-tRNA(Asn/Gln) amidotransferase subunit C.